A 642-amino-acid polypeptide reads, in one-letter code: Stress-activated map kinase-interacting protein 1 homolog (642 aa).

The region spanning 189-314 (ARIREVIGYC…EREPLFQGLL (126 aa)) is the CRIM domain. Positions 603 to 642 (IVSPSSDAPSRSSNGKNGGKFRKMSSLMASVMGRRKSDSK) are disordered. Low complexity predominate over residues 605-615 (SPSSDAPSRSS).

The protein belongs to the SIN1 family. As to quaternary structure, component of the target of rapamycin complex 2 (TORC2).

Component of the target of rapamycin complex 2 (TORC2), which transduces signals from growth factors to pathways involved in proliferation, cytoskeletal organization and anabolic output. In response to growth factors, TORC2 phosphorylates and activates AGC protein kinase family members, such as Akt1. Within the TORC2 complex, sinh-1 acts as a substrate adapter which recognizes and binds AGC protein kinase family members for phosphorylation by mTor. The chain is Stress-activated map kinase-interacting protein 1 homolog (sinh-1) from Caenorhabditis elegans.